Consider the following 314-residue polypeptide: E3 ubiquitin-protein ligase SINA-like 11 (314 aa).

A compositionally biased stretch (polar residues) spans 1–12; sequence MEDSNSHPQNQT. The interval 1–31 is disordered; sequence MEDSNSHPQNQTSKRKSSHPQKKQRMENETR. Over residues 13–23 the composition is skewed to basic residues; the sequence is SKRKSSHPQKK. The RING-type; degenerate zinc-finger motif lies at 43-81; sequence CPVCFEPLTIPTFQCDDGHIVCNFCFAKVSNKCPGPGCD. The interval 95–280 is SBD; sequence VLESAFVPCQ…PANEVQQVTI (186 aa). An SIAH-type zinc finger spans residues 98-156; that stretch reads SAFVPCQNTEFGCTKSVSYEKVSSHEKECNYSQCSCPNLECNYTGSYNIIYGHFMRRHL. 8 residues coordinate Zn(2+): Cys-103, Cys-110, His-122, Cys-126, Cys-133, Cys-138, His-150, and His-155.

The protein belongs to the SINA (Seven in absentia) family.

The catalysed reaction is S-ubiquitinyl-[E2 ubiquitin-conjugating enzyme]-L-cysteine + [acceptor protein]-L-lysine = [E2 ubiquitin-conjugating enzyme]-L-cysteine + N(6)-ubiquitinyl-[acceptor protein]-L-lysine.. The protein operates within protein modification; protein ubiquitination. Its function is as follows. E3 ubiquitin-protein ligase that mediates ubiquitination and subsequent proteasomal degradation of target proteins. E3 ubiquitin ligases accept ubiquitin from an E2 ubiquitin-conjugating enzyme in the form of a thioester and then directly transfers the ubiquitin to targeted substrates. It probably triggers the ubiquitin-mediated degradation of different substrates. The polypeptide is E3 ubiquitin-protein ligase SINA-like 11 (Arabidopsis thaliana (Mouse-ear cress)).